A 287-amino-acid chain; its full sequence is Elongation factor Ts (287 aa).

The segment at 77–80 (TDFV) is involved in Mg(2+) ion dislocation from EF-Tu.

It belongs to the EF-Ts family.

Its subcellular location is the cytoplasm. Associates with the EF-Tu.GDP complex and induces the exchange of GDP to GTP. It remains bound to the aminoacyl-tRNA.EF-Tu.GTP complex up to the GTP hydrolysis stage on the ribosome. This chain is Elongation factor Ts, found in Wolbachia sp. subsp. Brugia malayi (strain TRS).